Here is a 200-residue protein sequence, read N- to C-terminus: Large ribosomal subunit protein uL4 (200 aa).

The tract at residues serine 42–alanine 69 is disordered.

The protein belongs to the universal ribosomal protein uL4 family. As to quaternary structure, part of the 50S ribosomal subunit.

In terms of biological role, one of the primary rRNA binding proteins, this protein initially binds near the 5'-end of the 23S rRNA. It is important during the early stages of 50S assembly. It makes multiple contacts with different domains of the 23S rRNA in the assembled 50S subunit and ribosome. Its function is as follows. Forms part of the polypeptide exit tunnel. The protein is Large ribosomal subunit protein uL4 of Alcanivorax borkumensis (strain ATCC 700651 / DSM 11573 / NCIMB 13689 / SK2).